The following is a 1178-amino-acid chain: F-box/WD repeat-containing protein A-like protein (1178 aa).

Positions 1–208 (MQYVNGMDIV…TLPNLIKYIK (208 aa)) constitute an START domain. Disordered stretches follow at residues 223-296 (KTPD…NLNE), 569-594 (SLII…DNGI), and 618-649 (SSSS…STFS). Low complexity-rich tracts occupy residues 229 to 293 (NPNL…SNEN) and 571 to 580 (IINSPPNSNN). Residues 717-763 (CSLFDLLPYEMIQYIFTLMDATHLIRMSRTCKYFNRICLDDNIWRDL) enclose the F-box domain. The segment at 804 to 841 (KKSNNSSPLSASSSSSSPSPPLLPPPPPPIPQLPDMLL) is disordered. The segment covering 809–820 (SSPLSASSSSSS) has biased composition (low complexity). Over residues 821–835 (PSPPLLPPPPPPIPQ) the composition is skewed to pro residues. 7 WD repeats span residues 886–923 (GHKG…CEST), 925–979 (RCGA…IEKE), 981–1017 (RFLY…ELQM), 1020–1059 (IENT…TELV), 1062–1100 (GHKG…SAIH), 1104–1141 (SHSS…EPNL), and 1146–1178 (NNLS…FNSK).

Functionally, substrate recognition component of a SCF (SKP1-CUL1-F-box protein) E3 ubiquitin-protein ligase complex which mediates the ubiquitination and subsequent proteasomal degradation of target proteins. This Dictyostelium discoideum (Social amoeba) protein is F-box/WD repeat-containing protein A-like protein.